We begin with the raw amino-acid sequence, 144 residues long: 3-hydroxyacyl-[acyl-carrier-protein] dehydratase FabZ (144 aa).

Residue His-48 is part of the active site.

It belongs to the thioester dehydratase family. FabZ subfamily.

The protein localises to the cytoplasm. It catalyses the reaction a (3R)-hydroxyacyl-[ACP] = a (2E)-enoyl-[ACP] + H2O. In terms of biological role, involved in unsaturated fatty acids biosynthesis. Catalyzes the dehydration of short chain beta-hydroxyacyl-ACPs and long chain saturated and unsaturated beta-hydroxyacyl-ACPs. This chain is 3-hydroxyacyl-[acyl-carrier-protein] dehydratase FabZ, found in Bacillus anthracis (strain A0248).